We begin with the raw amino-acid sequence, 275 residues long: Tryptophan synthase alpha chain (275 aa).

Catalysis depends on proton acceptor residues Glu49 and Asp60.

The protein belongs to the TrpA family. In terms of assembly, tetramer of two alpha and two beta chains.

The enzyme catalyses (1S,2R)-1-C-(indol-3-yl)glycerol 3-phosphate + L-serine = D-glyceraldehyde 3-phosphate + L-tryptophan + H2O. It participates in amino-acid biosynthesis; L-tryptophan biosynthesis; L-tryptophan from chorismate: step 5/5. The alpha subunit is responsible for the aldol cleavage of indoleglycerol phosphate to indole and glyceraldehyde 3-phosphate. The polypeptide is Tryptophan synthase alpha chain (Nitrosomonas europaea (strain ATCC 19718 / CIP 103999 / KCTC 2705 / NBRC 14298)).